The primary structure comprises 708 residues: Putative adhesion G protein-coupled receptor F2P (708 aa).

The Extracellular segment spans residues 1–451 (MGLTAYGNRR…ESLILTYITY (451 aa)). N-linked (GlcNAc...) asparagine glycosylation is found at Asn21, Asn220, Asn252, Asn260, Asn305, Asn313, and Asn358. The GAIN-B domain maps to 293 to 442 (MGTTISGDNI…SILMSPHILE (150 aa)). Intrachain disulfides connect Cys394-Cys421 and Cys409-Cys423. The segment at 394–442 (CVGWHSVENRWDQQACKMIQENSQQAVCKCRPSKLFTSFSILMSPHILE) is GPS. A helical transmembrane segment spans residues 452–472 (VGLGISICSLILCLSIEVLVW). Residues 473 to 487 (SQVTKTEITYLRHVC) lie on the Cytoplasmic side of the membrane. The chain crosses the membrane as a helical span at residues 488–508 (IVNIAATLLMADVWFIVASFL). Topologically, residues 509–530 (SGPITHHKGCVAATFFVHFFYL) are extracellular. A helical transmembrane segment spans residues 531-551 (SVFFWMLAKALLILYGIMIVF). Residues 552 to 557 (HTLPKS) are Cytoplasmic-facing. The helical transmembrane segment at 558–578 (VLVASLFSVGYGCPLAIAAIT) threads the bilayer. The Extracellular segment spans residues 579–606 (VAATEPGKGYLRPEICWLNWDMTKALLA). Residues 607–627 (FVIPALAIVVVNLITVTLVIV) traverse the membrane as a helical segment. Over 628 to 650 (KTQRAAIGNSMFQEVRAIVRISK) the chain is Cytoplasmic. The helical transmembrane segment at 651–671 (NIAILTPLLGLTWGFGVATVI) threads the bilayer. The Extracellular segment spans residues 672-674 (DDR). Residues 675 to 695 (SLAFHIIFSLLNAFQVSPDAS) traverse the membrane as a helical segment. Over 696 to 708 (DQVQSERIHEDVL) the chain is Cytoplasmic.

This sequence belongs to the G-protein coupled receptor 2 family. Adhesion G-protein coupled receptor (ADGR) subfamily. In terms of tissue distribution, high expression in kidney. Up-regulated in lung adenocarcinomas and prostate cancers.

Its subcellular location is the membrane. Functionally, orphan receptor. The sequence is that of Putative adhesion G protein-coupled receptor F2P from Homo sapiens (Human).